A 162-amino-acid polypeptide reads, in one-letter code: Fibroblast growth factor 22 (162 aa).

An N-terminal signal peptide occupies residues 1-22; the sequence is MRSRLWLGLAWLLLARAPGAPG.

It belongs to the heparin-binding growth factors family. As to quaternary structure, interacts with FGFR1 and FGFR2. Interacts with FGFBP1. As to expression, preferentially expressed in skin; low expression in brain. Expressed in the inner root sheath of the hair follicle.

It is found in the secreted. Plays a role in the fasting response, glucose homeostasis, lipolysis and lipogenesis. Can stimulate cell proliferation (in vitro). May be involved in hair development. This is Fibroblast growth factor 22 (Fgf22) from Mus musculus (Mouse).